The primary structure comprises 87 residues: Putative autophagy-related protein 8E (87 aa).

Over residues 1 to 14 (MEERRKEKGKEGRR) the composition is skewed to basic and acidic residues. Residues 1–30 (MEERRKEKGKEGRRGKATGHSVDKFSRSNL) are disordered. Gly-87 carries the Phosphatidylethanolamine amidated glycine lipid modification.

The protein belongs to the ATG8 family. As to quaternary structure, interacts with ATG4. Post-translationally, the C-terminal Gly is amidated with phosphatidylethanolamine by an activating system similar to that for ubiquitin.

It is found in the cytoplasmic vesicle. The protein resides in the autophagosome membrane. The protein localises to the vacuole membrane. It localises to the cytoplasm. Its subcellular location is the cytoskeleton. Functionally, ubiquitin-like modifier involved in autophagosomes formation. May mediate the delivery of the autophagosomes to the vacuole via the microtubule cytoskeleton. The sequence is that of Putative autophagy-related protein 8E (ATG8E) from Oryza sativa subsp. japonica (Rice).